Reading from the N-terminus, the 217-residue chain is Imidazole glycerol phosphate synthase subunit HisH (217 aa).

The Glutamine amidotransferase type-1 domain maps to 3–217 (SVAVIDYGMG…FLRWEPWSSR (215 aa)). Cys82 functions as the Nucleophile in the catalytic mechanism. Active-site residues include His193 and Glu195.

Heterodimer of HisH and HisF.

It is found in the cytoplasm. The enzyme catalyses 5-[(5-phospho-1-deoxy-D-ribulos-1-ylimino)methylamino]-1-(5-phospho-beta-D-ribosyl)imidazole-4-carboxamide + L-glutamine = D-erythro-1-(imidazol-4-yl)glycerol 3-phosphate + 5-amino-1-(5-phospho-beta-D-ribosyl)imidazole-4-carboxamide + L-glutamate + H(+). It carries out the reaction L-glutamine + H2O = L-glutamate + NH4(+). It functions in the pathway amino-acid biosynthesis; L-histidine biosynthesis; L-histidine from 5-phospho-alpha-D-ribose 1-diphosphate: step 5/9. Its function is as follows. IGPS catalyzes the conversion of PRFAR and glutamine to IGP, AICAR and glutamate. The HisH subunit catalyzes the hydrolysis of glutamine to glutamate and ammonia as part of the synthesis of IGP and AICAR. The resulting ammonia molecule is channeled to the active site of HisF. In Methylococcus capsulatus (strain ATCC 33009 / NCIMB 11132 / Bath), this protein is Imidazole glycerol phosphate synthase subunit HisH.